Here is a 486-residue protein sequence, read N- to C-terminus: Ribosomal RNA small subunit methyltransferase F (486 aa).

S-adenosyl-L-methionine contacts are provided by residues 124–130 (ASAPGSK), Glu148, Asp175, and Asp193. The Nucleophile role is filled by Cys246.

The protein belongs to the class I-like SAM-binding methyltransferase superfamily. RsmB/NOP family.

It localises to the cytoplasm. It carries out the reaction cytidine(1407) in 16S rRNA + S-adenosyl-L-methionine = 5-methylcytidine(1407) in 16S rRNA + S-adenosyl-L-homocysteine + H(+). Specifically methylates the cytosine at position 1407 (m5C1407) of 16S rRNA. The chain is Ribosomal RNA small subunit methyltransferase F from Shewanella baltica (strain OS223).